The primary structure comprises 1368 residues: DNA-directed RNA polymerase subunit beta (1368 aa).

The protein belongs to the RNA polymerase beta chain family. In terms of assembly, the RNAP catalytic core consists of 2 alpha, 1 beta, 1 beta' and 1 omega subunit. When a sigma factor is associated with the core the holoenzyme is formed, which can initiate transcription.

It carries out the reaction RNA(n) + a ribonucleoside 5'-triphosphate = RNA(n+1) + diphosphate. DNA-dependent RNA polymerase catalyzes the transcription of DNA into RNA using the four ribonucleoside triphosphates as substrates. The sequence is that of DNA-directed RNA polymerase subunit beta from Legionella pneumophila (strain Lens).